Reading from the N-terminus, the 259-residue chain is Polycomb group RING finger protein 1 (259 aa).

Residues 45-84 form an RING-type zinc finger; it reads CYLCAGYFIDATTITECLHTFCKSCIVKYLQTSKYCPLCN.

In terms of assembly, component of a PRC1-like complex.

It is found in the nucleus. Functionally, component of a Polycomb group (PcG) multiprotein PRC1-like complex, a complex class required to maintain the transcriptionally repressive state of many genes, including Hox genes, throughout development. PcG PRC1 complex acts via chromatin remodeling and modification of histones; it mediates monoubiquitination of histone H2A 'Lys-119', rendering chromatin heritably changed in its expressibility. This Xenopus laevis (African clawed frog) protein is Polycomb group RING finger protein 1 (pcgf1).